A 349-amino-acid chain; its full sequence is ATPase GET3 (349 aa).

26–33 lines the ATP pocket; that stretch reads KGGVGKTT. The active site involves Asp57. ATP is bound by residues Glu240 and Asn267. Positions 280 and 283 each coordinate Zn(2+).

It belongs to the arsA ATPase family. In terms of assembly, homodimer. Component of the Golgi to ER traffic (GET) complex, which is composed of GET1, GET2 and GET3. Within the complex, GET1 and GET2 form a heterotetramer which is stabilized by phosphatidylinositol binding and which binds to the GET3 homodimer. Interacts with the chloride channel protein GEF1.

It is found in the cytoplasm. Its subcellular location is the endoplasmic reticulum. The protein localises to the golgi apparatus. Its function is as follows. ATPase required for the post-translational delivery of tail-anchored (TA) proteins to the endoplasmic reticulum. Recognizes and selectively binds the transmembrane domain of TA proteins in the cytosol. This complex then targets to the endoplasmic reticulum by membrane-bound receptors GET1 and GET2, where the tail-anchored protein is released for insertion. This process is regulated by ATP binding and hydrolysis. ATP binding drives the homodimer towards the closed dimer state, facilitating recognition of newly synthesized TA membrane proteins. ATP hydrolysis is required for insertion. Subsequently, the homodimer reverts towards the open dimer state, lowering its affinity for the GET1-GET2 receptor, and returning it to the cytosol to initiate a new round of targeting. Cooperates with the HDEL receptor ERD2 to mediate the ATP-dependent retrieval of resident ER proteins that contain a C-terminal H-D-E-L retention signal from the Golgi to the ER. Involved in low-level resistance to the oxyanions arsenite and arsenate, and in heat tolerance. This Kluyveromyces lactis (strain ATCC 8585 / CBS 2359 / DSM 70799 / NBRC 1267 / NRRL Y-1140 / WM37) (Yeast) protein is ATPase GET3.